A 274-amino-acid polypeptide reads, in one-letter code: tRNA pseudouridine synthase A (274 aa).

D51 (nucleophile) is an active-site residue. Substrate is bound at residue Y109.

This sequence belongs to the tRNA pseudouridine synthase TruA family. Homodimer.

It carries out the reaction uridine(38/39/40) in tRNA = pseudouridine(38/39/40) in tRNA. Formation of pseudouridine at positions 38, 39 and 40 in the anticodon stem and loop of transfer RNAs. This is tRNA pseudouridine synthase A from Acidovorax sp. (strain JS42).